We begin with the raw amino-acid sequence, 347 residues long: D-alanine--D-alanine ligase (347 aa).

The 203-residue stretch at 131–333 (KRVLESAGIA…YPELIERLVD (203 aa)) folds into the ATP-grasp domain. Residue 161 to 216 (EEKLAYPVFAKPSNMGSSVGISKSENQEELRQALKLAFRYDSRVLVEQGVNAREIE) participates in ATP binding. 3 residues coordinate Mg(2+): aspartate 287, glutamate 300, and asparagine 302.

The protein belongs to the D-alanine--D-alanine ligase family. It depends on Mg(2+) as a cofactor. Mn(2+) is required as a cofactor.

Its subcellular location is the cytoplasm. It carries out the reaction 2 D-alanine + ATP = D-alanyl-D-alanine + ADP + phosphate + H(+). Its pathway is cell wall biogenesis; peptidoglycan biosynthesis. In terms of biological role, cell wall formation. This Streptococcus pneumoniae (strain P1031) protein is D-alanine--D-alanine ligase.